Reading from the N-terminus, the 84-residue chain is Magnetosome protein MamR (84 aa).

It belongs to the magnetosome MamR family.

It localises to the magnetosome. In terms of biological role, may play a role in controlling magnetite number and size but not in control of magnetite morphology. This Paramagnetospirillum magneticum (strain ATCC 700264 / AMB-1) (Magnetospirillum magneticum) protein is Magnetosome protein MamR.